The chain runs to 224 residues: PKHD-type hydroxylase HNE_1625 (224 aa).

The region spanning 77 to 175 (KFAPPLISCS…RFVFVGWIQS (99 aa)) is the Fe2OG dioxygenase domain. Fe cation-binding residues include H95, D97, and H156. Residue R166 participates in 2-oxoglutarate binding.

It depends on Fe(2+) as a cofactor. The cofactor is L-ascorbate.

The protein is PKHD-type hydroxylase HNE_1625 of Hyphomonas neptunium (strain ATCC 15444).